Consider the following 657-residue polypeptide: 1-deoxy-D-xylulose-5-phosphate synthase (657 aa).

Residues His-73 and 113–115 (SHA) contribute to the thiamine diphosphate site. Asp-145 lines the Mg(2+) pocket. Thiamine diphosphate-binding positions include 146 to 147 (GA), Asn-175, Tyr-293, and Glu-375. A Mg(2+)-binding site is contributed by Asn-175.

This sequence belongs to the transketolase family. DXPS subfamily. In terms of assembly, homodimer. Mg(2+) is required as a cofactor. The cofactor is thiamine diphosphate.

It carries out the reaction D-glyceraldehyde 3-phosphate + pyruvate + H(+) = 1-deoxy-D-xylulose 5-phosphate + CO2. The protein operates within metabolic intermediate biosynthesis; 1-deoxy-D-xylulose 5-phosphate biosynthesis; 1-deoxy-D-xylulose 5-phosphate from D-glyceraldehyde 3-phosphate and pyruvate: step 1/1. In terms of biological role, catalyzes the acyloin condensation reaction between C atoms 2 and 3 of pyruvate and glyceraldehyde 3-phosphate to yield 1-deoxy-D-xylulose-5-phosphate (DXP). This chain is 1-deoxy-D-xylulose-5-phosphate synthase, found in Paenarthrobacter aurescens (strain TC1).